We begin with the raw amino-acid sequence, 317 residues long: tRNA uridine(34) hydroxylase (317 aa).

The 95-residue stretch at 123-217 (EDDDTIVIDA…YGKDPETKGE (95 aa)) folds into the Rhodanese domain. Catalysis depends on C177, which acts as the Cysteine persulfide intermediate.

Belongs to the TrhO family.

The catalysed reaction is uridine(34) in tRNA + AH2 + O2 = 5-hydroxyuridine(34) in tRNA + A + H2O. In terms of biological role, catalyzes oxygen-dependent 5-hydroxyuridine (ho5U) modification at position 34 in tRNAs. In Staphylococcus carnosus (strain TM300), this protein is tRNA uridine(34) hydroxylase.